The primary structure comprises 644 residues: Core protein VP4 (644 aa).

The protein belongs to the orbivirus VP4 family.

It localises to the virion. In terms of biological role, the VP4 protein is one of the five proteins (with VP1, VP3, VP6 and VP7) which form the inner capsid of the virus. The sequence is that of Core protein VP4 (Segment-4) from Bluetongue virus 13 (isolate USA) (BTV 13).